Here is a 313-residue protein sequence, read N- to C-terminus: Putative S-adenosyl-L-methionine-dependent methyltransferase MAV_4573 (313 aa).

S-adenosyl-L-methionine is bound by residues aspartate 129 and 158 to 159 (DL).

Belongs to the UPF0677 family.

Functionally, exhibits S-adenosyl-L-methionine-dependent methyltransferase activity. The sequence is that of Putative S-adenosyl-L-methionine-dependent methyltransferase MAV_4573 from Mycobacterium avium (strain 104).